A 186-amino-acid polypeptide reads, in one-letter code: Adenine phosphoribosyltransferase (186 aa).

Belongs to the purine/pyrimidine phosphoribosyltransferase family. As to quaternary structure, homodimer.

The protein localises to the cytoplasm. The enzyme catalyses AMP + diphosphate = 5-phospho-alpha-D-ribose 1-diphosphate + adenine. Its pathway is purine metabolism; AMP biosynthesis via salvage pathway; AMP from adenine: step 1/1. Functionally, catalyzes a salvage reaction resulting in the formation of AMP, that is energically less costly than de novo synthesis. This Xanthomonas campestris pv. campestris (strain B100) protein is Adenine phosphoribosyltransferase.